The chain runs to 241 residues: uncharacterized protein (241 aa).

3 disordered regions span residues 19–59, 101–139, and 152–182; these read ERDR…QQLG, VRRP…ASRS, and RGCR…KPCS. Residues 34-48 show a composition bias toward gly residues; the sequence is ARGGRGLWTVGGGGS. Residues 49 to 58 show a composition bias toward polar residues; sequence PTETAESQQL. Residues 106-118 are compositionally biased toward pro residues; sequence PSVPSPLPKPPVP.

This is an uncharacterized protein from Homo sapiens (Human).